The chain runs to 272 residues: Probable proteasome subunit beta type-5 (272 aa).

A propeptide spans 1-61 (MNSIVSKYTQ…KHCLIKMNHG (61 aa)) (removed in mature form). The active-site Nucleophile is the Thr62.

This sequence belongs to the peptidase T1B family. In terms of assembly, the 26S proteasome consists of a 20S proteasome core and two 19S regulatory subunits. The 20S proteasome core is composed of 28 subunits that are arranged in four stacked rings, resulting in a barrel-shaped structure. The two end rings are each formed by seven alpha subunits, and the two central rings are each formed by seven beta subunits. The catalytic chamber with the active sites is on the inside of the barrel.

The protein localises to the cytoplasm. It localises to the nucleus. It catalyses the reaction Cleavage of peptide bonds with very broad specificity.. Its function is as follows. The proteasome is a multicatalytic proteinase complex which is characterized by its ability to cleave peptides with Arg, Phe, Tyr, Leu, and Glu adjacent to the leaving group at neutral or slightly basic pH. The proteasome has an ATP-dependent proteolytic activity. The chain is Probable proteasome subunit beta type-5 (pts1) from Schizosaccharomyces pombe (strain 972 / ATCC 24843) (Fission yeast).